Here is a 427-residue protein sequence, read N- to C-terminus: Dihydroorotase (427 aa).

Zn(2+) contacts are provided by H60 and H62. Residues 62-64 and N94 contribute to the substrate site; that span reads HFR. Zn(2+)-binding residues include D152, H179, and H232. N278 serves as a coordination point for substrate. D305 provides a ligand contact to Zn(2+). D305 is an active-site residue. Substrate is bound by residues H309 and 323–324; that span reads FG.

It belongs to the metallo-dependent hydrolases superfamily. DHOase family. Class I DHOase subfamily. Zn(2+) is required as a cofactor.

The enzyme catalyses (S)-dihydroorotate + H2O = N-carbamoyl-L-aspartate + H(+). It functions in the pathway pyrimidine metabolism; UMP biosynthesis via de novo pathway; (S)-dihydroorotate from bicarbonate: step 3/3. Catalyzes the reversible cyclization of carbamoyl aspartate to dihydroorotate. The protein is Dihydroorotase of Enterococcus faecalis (strain ATCC 700802 / V583).